The sequence spans 186 residues: Ribosome-recycling factor (186 aa).

Belongs to the RRF family.

The protein resides in the cytoplasm. In terms of biological role, responsible for the release of ribosomes from messenger RNA at the termination of protein biosynthesis. May increase the efficiency of translation by recycling ribosomes from one round of translation to another. The chain is Ribosome-recycling factor from Rickettsia peacockii (strain Rustic).